Reading from the N-terminus, the 196-residue chain is Phosphoheptose isomerase (196 aa).

In terms of domain architecture, SIS spans 34–193 (LIETFKIGNK…EQGLFGIFAG (160 aa)). Residue 49 to 51 (NGG) participates in substrate binding. Residues His58 and Glu62 each contribute to the Zn(2+) site. Substrate is bound by residues Glu62, 91–92 (ND), 117–119 (STS), Ser122, and Gln169. Zn(2+)-binding residues include Gln169 and His177.

Belongs to the SIS family. GmhA subfamily. As to quaternary structure, homotetramer. Zn(2+) is required as a cofactor.

It localises to the cytoplasm. It carries out the reaction 2 D-sedoheptulose 7-phosphate = D-glycero-alpha-D-manno-heptose 7-phosphate + D-glycero-beta-D-manno-heptose 7-phosphate. It functions in the pathway carbohydrate biosynthesis; D-glycero-D-manno-heptose 7-phosphate biosynthesis; D-glycero-alpha-D-manno-heptose 7-phosphate and D-glycero-beta-D-manno-heptose 7-phosphate from sedoheptulose 7-phosphate: step 1/1. In terms of biological role, catalyzes the isomerization of sedoheptulose 7-phosphate in D-glycero-D-manno-heptose 7-phosphate. The protein is Phosphoheptose isomerase of Trichlorobacter lovleyi (strain ATCC BAA-1151 / DSM 17278 / SZ) (Geobacter lovleyi).